We begin with the raw amino-acid sequence, 1054 residues long: Filament-like plant protein 6 (1054 aa).

3 coiled-coil regions span residues 64–139 (VQIK…VKQH), 174–200 (AEDRAAHLDGALKECMRQIRNLKKDHE), and 250–341 (SNML…RKKL). Disordered stretches follow at residues 359–390 (RDSGDARQKRSPVKVSSPCKSPGGYSSTGSEF) and 448–506 (EAQL…KEKD). Composition is skewed to low complexity over residues 371-380 (VKVSSPCKSP), 450-461 (QLQQNNSQKSSL), and 470-494 (SNPSSSISVSEDGNDDSGSCSGSLS). Residues 389-463 (EFSLDNAQKF…NNSQKSSLEV (75 aa)) adopt a coiled-coil conformation. 2 coiled-coil regions span residues 637 to 666 (QNLVEDCHLAEQKLQSIHQDLKNAVSRIHD) and 788 to 944 (ESDS…IFVL). A disordered region spans residues 951–1054 (FRPQPEQMRS…SRFFSSKSGY (104 aa)). A compositionally biased stretch (low complexity) spans 1007–1032 (PSDSETSDTTTSPSRVGSRLSRSGSS).

This sequence belongs to the FPP family. Interacts with WPP/MAF proteins.

The polypeptide is Filament-like plant protein 6 (FPP6) (Arabidopsis thaliana (Mouse-ear cress)).